The chain runs to 330 residues: BTB/POZ domain-containing adapter for CUL3-mediated RhoA degradation protein 1 (330 aa).

Residues 1 to 34 form a disordered region; that stretch reads MSAEASGSSGGHAVTVSGSSPSSSSHVGEEKPGR. The BTB domain occupies 40 to 108; the sequence is KYVKLNVGGT…LRDGTVPLPD (69 aa). Residues 282-291 show a composition bias toward low complexity; that stretch reads GGVSSSGAGQ. The disordered stretch occupies residues 282 to 304; sequence GGVSSSGAGQSEEEGAGAGGGDR.

It belongs to the BACURD family.

It is found in the nucleus. Functionally, substrate-specific adapter of a BCR (BTB-CUL3-RBX1) E3 ubiquitin-protein ligase complex required for synaptic transmission. The BCR(KCTD13) E3 ubiquitin ligase complex mediates the ubiquitination of RHOA, leading to its degradation by the proteasome, thereby regulating the actin cytoskeleton and promoting synaptic transmission. The polypeptide is BTB/POZ domain-containing adapter for CUL3-mediated RhoA degradation protein 1 (Danio rerio (Zebrafish)).